Reading from the N-terminus, the 137-residue chain is Nucleoside diphosphate kinase (137 aa).

ATP is bound by residues lysine 10, phenylalanine 59, arginine 87, threonine 93, arginine 104, and asparagine 114. The Pros-phosphohistidine intermediate role is filled by histidine 117.

The protein belongs to the NDK family. Homotetramer. Mg(2+) serves as cofactor.

Its subcellular location is the cytoplasm. It carries out the reaction a 2'-deoxyribonucleoside 5'-diphosphate + ATP = a 2'-deoxyribonucleoside 5'-triphosphate + ADP. The catalysed reaction is a ribonucleoside 5'-diphosphate + ATP = a ribonucleoside 5'-triphosphate + ADP. In terms of biological role, major role in the synthesis of nucleoside triphosphates other than ATP. The ATP gamma phosphate is transferred to the NDP beta phosphate via a ping-pong mechanism, using a phosphorylated active-site intermediate. The chain is Nucleoside diphosphate kinase from Streptomyces coelicolor (strain ATCC BAA-471 / A3(2) / M145).